Here is a 251-residue protein sequence, read N- to C-terminus: Hydroxyacylglutathione hydrolase (251 aa).

His-53, His-55, Asp-57, His-58, His-110, Asp-127, and His-165 together coordinate Zn(2+).

It belongs to the metallo-beta-lactamase superfamily. Glyoxalase II family. In terms of assembly, monomer. The cofactor is Zn(2+).

The catalysed reaction is an S-(2-hydroxyacyl)glutathione + H2O = a 2-hydroxy carboxylate + glutathione + H(+). The protein operates within secondary metabolite metabolism; methylglyoxal degradation; (R)-lactate from methylglyoxal: step 2/2. Functionally, thiolesterase that catalyzes the hydrolysis of S-D-lactoyl-glutathione to form glutathione and D-lactic acid. This Escherichia coli (strain SE11) protein is Hydroxyacylglutathione hydrolase.